Reading from the N-terminus, the 341-residue chain is 4-hydroxy-2-oxovalerate aldolase (341 aa).

In terms of domain architecture, Pyruvate carboxyltransferase spans 9-259; the sequence is VRITEVCLRD…KLDIDLYKMM (251 aa). 17–18 lines the substrate pocket; that stretch reads RD. Mn(2+) is bound at residue D18. H21 (proton acceptor) is an active-site residue. S171 and H198 together coordinate substrate. Residues H198 and H200 each contribute to the Mn(2+) site. Y289 is a binding site for substrate.

The protein belongs to the 4-hydroxy-2-oxovalerate aldolase family.

It catalyses the reaction (S)-4-hydroxy-2-oxopentanoate = acetaldehyde + pyruvate. The sequence is that of 4-hydroxy-2-oxovalerate aldolase from Bacillus cereus (strain ATCC 10987 / NRS 248).